We begin with the raw amino-acid sequence, 249 residues long: Uroplakin-3b-like protein 1 (249 aa).

Residues Met1 to Gly26 form the signal peptide. At Leu27–Val194 the chain is on the extracellular side. Asn63, Asn82, and Asn133 each carry an N-linked (GlcNAc...) asparagine glycan. Residues Ile195–Ile215 form a helical membrane-spanning segment. Residues Ser216 to Ser249 are Cytoplasmic-facing.

Belongs to the uroplakin-3 family.

The protein localises to the membrane. The protein is Uroplakin-3b-like protein 1 of Mus musculus (Mouse).